The chain runs to 857 residues: Bifunctional levopimaradiene synthase, chloroplastic (857 aa).

A chloroplast-targeting transit peptide spans methionine 1–serine 33. Lysine 257 is a substrate binding site. Mg(2+) contacts are provided by aspartate 390 and aspartate 392. The DXDD motif motif lies at aspartate 390–aspartate 393. Lysine 477 is a substrate binding site. Mg(2+)-binding residues include aspartate 609, aspartate 613, asparagine 753, threonine 757, and glutamate 761. Positions aspartate 609–aspartate 613 match the DDXXD motif motif.

It belongs to the terpene synthase family. Tpsd subfamily. Requires Mg(2+) as cofactor.

It is found in the plastid. The protein resides in the chloroplast. The catalysed reaction is (2E,6E,10E)-geranylgeranyl diphosphate = (+)-copalyl diphosphate. It catalyses the reaction (+)-copalyl diphosphate = abieta-7,13-diene + diphosphate. The enzyme catalyses (+)-copalyl diphosphate = abieta-8(14),12-diene + diphosphate. It carries out the reaction (+)-copalyl diphosphate = neoabietadiene + diphosphate. Its pathway is terpene metabolism; oleoresin biosynthesis. Its function is as follows. Involved in defensive oleoresin formation in conifers in response to insect attack or other injury. Involved in diterpene (C20) olefins biosynthesis. Bifunctional enzyme that catalyzes two sequential cyclizations of geranylgeranyl diphosphate (GGPP) to levopimaradiene. Levopimaradiene is the major products of the enzyme with abietadiene and neoabietadiene. No activity with farnesyl diphosphate (FPP) as substrate. The protein is Bifunctional levopimaradiene synthase, chloroplastic of Pinus contorta (Shore pine).